The following is a 93-amino-acid chain: uncharacterized protein (93 aa).

This is an uncharacterized protein from Methanocaldococcus jannaschii (strain ATCC 43067 / DSM 2661 / JAL-1 / JCM 10045 / NBRC 100440) (Methanococcus jannaschii).